The primary structure comprises 160 residues: Probable chemoreceptor glutamine deamidase CheD 2 (160 aa).

The protein belongs to the CheD family.

It carries out the reaction L-glutaminyl-[protein] + H2O = L-glutamyl-[protein] + NH4(+). Probably deamidates glutamine residues to glutamate on methyl-accepting chemotaxis receptors (MCPs), playing an important role in chemotaxis. The polypeptide is Probable chemoreceptor glutamine deamidase CheD 2 (Geobacter sulfurreducens (strain ATCC 51573 / DSM 12127 / PCA)).